A 466-amino-acid polypeptide reads, in one-letter code: 3-isopropylmalate dehydratase large subunit (466 aa).

[4Fe-4S] cluster contacts are provided by C347, C407, and C410.

The protein belongs to the aconitase/IPM isomerase family. LeuC type 1 subfamily. As to quaternary structure, heterodimer of LeuC and LeuD. The cofactor is [4Fe-4S] cluster.

The enzyme catalyses (2R,3S)-3-isopropylmalate = (2S)-2-isopropylmalate. Its pathway is amino-acid biosynthesis; L-leucine biosynthesis; L-leucine from 3-methyl-2-oxobutanoate: step 2/4. Its function is as follows. Catalyzes the isomerization between 2-isopropylmalate and 3-isopropylmalate, via the formation of 2-isopropylmaleate. In Pectobacterium carotovorum subsp. carotovorum (strain PC1), this protein is 3-isopropylmalate dehydratase large subunit.